A 380-amino-acid chain; its full sequence is Cytochrome b (380 aa).

4 consecutive transmembrane segments (helical) span residues 34–54 (FGSL…LLAM), 78–99 (WLIR…YLHI), 114–134 (WNTG…GYVL), and 179–199 (FFAL…IHLT). 2 residues coordinate heme b: His-84 and His-98. Residues His-183 and His-197 each coordinate heme b. An a ubiquinone-binding site is contributed by His-202. 4 helical membrane-spanning segments follow: residues 227–247 (LKDI…ALFS), 289–309 (LGGV…PFLH), 321–341 (ISQL…WVGS), and 348–368 (FIII…VLFP).

The protein belongs to the cytochrome b family. As to quaternary structure, the cytochrome bc1 complex contains 11 subunits: 3 respiratory subunits (MT-CYB, CYC1 and UQCRFS1), 2 core proteins (UQCRC1 and UQCRC2) and 6 low-molecular weight proteins (UQCRH/QCR6, UQCRB/QCR7, UQCRQ/QCR8, UQCR10/QCR9, UQCR11/QCR10 and a cleavage product of UQCRFS1). This cytochrome bc1 complex then forms a dimer. It depends on heme b as a cofactor.

Its subcellular location is the mitochondrion inner membrane. Its function is as follows. Component of the ubiquinol-cytochrome c reductase complex (complex III or cytochrome b-c1 complex) that is part of the mitochondrial respiratory chain. The b-c1 complex mediates electron transfer from ubiquinol to cytochrome c. Contributes to the generation of a proton gradient across the mitochondrial membrane that is then used for ATP synthesis. The protein is Cytochrome b (MT-CYB) of Pelecanoides georgicus (South Georgia diving petrel).